Here is a 464-residue protein sequence, read N- to C-terminus: MMARRDPKSWAKRLVRAQTLQKQRRAPVGPRAPPPDEEDPRLKCKNCGAFGHTARSTTCPMKCWKAALVPATLGKKEGKENLKPWKPRGEANPGPLNKDKGEKEERPRQQDPQRKALLHMFSGKPPEKPLPNGKGSTESSEHLRVASGPMPVHTTSKRPRVDPVLADRSATEMSGRGSVLASLSPLRKASLSSSSSLGPKERQTGAAADIPQPAFRHQGPEPLLVVKPTHSSPEGGCREVPQAASKTHGLLQAARPQAQDKRPAVTSQPCPPAATHSLGLGSNLSFGPGAKRPAQAPIQACLNFPKKPRLGPFQIPESAIQGGELGAPENLQPPPAATELGPSTSPQMGRRTPAQVPSVDWQPPHSTPCLPTAQACTMSHHPAAGHDGAQPLRVLFRRLENGRWSSSLLAAPSFHSPEKPGAFLAQSPHVSEKSEAPCVRVPPSVLYEDLQVSSSSEDSDSDLE.

Disordered stretches follow at residues 1–42 (MMAR…DPRL), 69–373 (VPAT…LPTA), and 415–437 (HSPE…SEAP). Composition is skewed to basic and acidic residues over residues 74-89 (GKKE…KPRG) and 97-114 (NKDK…DPQR). A compositionally biased stretch (low complexity) spans 180 to 197 (LASLSPLRKASLSSSSSL).

Belongs to the FAM90 family.

The sequence is that of Protein FAM90A10 (FAM90A10) from Homo sapiens (Human).